A 455-amino-acid chain; its full sequence is Exodeoxyribonuclease 7 large subunit (455 aa).

This sequence belongs to the XseA family. In terms of assembly, heterooligomer composed of large and small subunits.

It localises to the cytoplasm. The catalysed reaction is Exonucleolytic cleavage in either 5'- to 3'- or 3'- to 5'-direction to yield nucleoside 5'-phosphates.. In terms of biological role, bidirectionally degrades single-stranded DNA into large acid-insoluble oligonucleotides, which are then degraded further into small acid-soluble oligonucleotides. The polypeptide is Exodeoxyribonuclease 7 large subunit (Oceanobacillus iheyensis (strain DSM 14371 / CIP 107618 / JCM 11309 / KCTC 3954 / HTE831)).